A 116-amino-acid polypeptide reads, in one-letter code: T-cell leukemia/lymphoma protein 1A (116 aa).

The protein belongs to the TCL1 family. In terms of assembly, homodimer. Interacts with AKT1, AKT2 and AKT3 (via PH domain). Interacts with PNPT1; the interaction has no effect on PNPT1 exonuclease activity.

The protein resides in the cytoplasm. Its subcellular location is the nucleus. It localises to the microsome. The protein localises to the endoplasmic reticulum. Functionally, enhances the phosphorylation and activation of AKT1 and AKT2. Enhances cell proliferation, stabilizes mitochondrial membrane potential and promotes cell survival. This Mus musculus (Mouse) protein is T-cell leukemia/lymphoma protein 1A (Tcl1a).